The primary structure comprises 314 residues: Vacuolar membrane protein FOSTERSO_4058 (314 aa).

Positions 32-59 (KPTSSVVSETSSKSLPSLTSSAFSTSSG) are disordered. The chain crosses the membrane as a helical span at residues 93-113 (VYIAVGAVIGAIFISILIWWL). Residues S148, S254, and S274 each carry the phosphoserine modification. The tract at residues 240-309 (EERKLNLNRP…PSMFLDDVLN (70 aa)) is disordered. Over residues 254-269 (SPERKEKKINSMEGYH) the composition is skewed to basic and acidic residues.

It belongs to the PRM5 family.

Its subcellular location is the vacuole membrane. This Saccharomyces cerevisiae (strain FostersO) (Baker's yeast) protein is Vacuolar membrane protein FOSTERSO_4058.